A 141-amino-acid chain; its full sequence is Galactose-6-phosphate isomerase subunit LacA (141 aa).

Belongs to the LacAB/RpiB family. In terms of assembly, heteromultimeric protein consisting of LacA and LacB.

It carries out the reaction aldehydo-D-galactose 6-phosphate = keto-D-tagatose 6-phosphate. Its pathway is carbohydrate metabolism; D-galactose 6-phosphate degradation; D-tagatose 6-phosphate from D-galactose 6-phosphate: step 1/1. The protein is Galactose-6-phosphate isomerase subunit LacA of Streptococcus pneumoniae (strain P1031).